The chain runs to 367 residues: Alpha-2-HS-glycoprotein (367 aa).

Positions 1–18 (MKSLVLLLCLAQLWGCHS) are cleaved as a signal peptide. One can recognise a Cystatin fetuin-A-type 1 domain in the interval 27 to 133 (YRQPNCDDPE…KFSVVYAKCD (107 aa)). Disulfide bonds link Cys32/Cys358, Cys89/Cys100, Cys114/Cys132, Cys146/Cys149, Cys208/Cys219, and Cys230/Cys247. Ser134 bears the Phosphoserine mark. Phosphoserine; by FAM20C occurs at positions 135 and 138. The 112-residue stretch at 144–255 (KVCQDCPLLA…TCMVFQTQPV (112 aa)) folds into the Cystatin fetuin-A-type 2 domain. N-linked (GlcNAc...) (complex) asparagine glycans are attached at residues Asn156 and Asn176. Residues 255–298 (VSSQPQPEGANEAVPTPVVDPDAPPSPPLGAPGLPPAGSPPDSH) form a disordered region. Residue Thr270 is glycosylated (O-linked (GalNAc...) threonine). The span at 276–293 (DAPPSPPLGAPGLPPAGS) shows a compositional bias: pro residues. Residues Ser280 and Ser293 are each glycosylated (O-linked (GalNAc...) serine). The propeptide at 301 to 340 (LAAPPGHQLHRAHYDLRHTFMGVVSLGSPSGEVSHPRKTR) is connecting peptide. Thr319 is modified (phosphothreonine; by FAM20C). Residues Ser325, Ser328, and Ser330 each carry the phosphoserine; by FAM20C modification. 2 O-linked (GalNAc...) threonine glycosylation sites follow: Thr339 and Thr341. O-linked (GalNAc...) serine glycosylation is present at Ser346.

The protein belongs to the fetuin family. Alpha-2-HS glycoprotein derives from this precursor, when the connecting peptide is cleaved off. The two chains A and B are held together by a single disulfide bond. In terms of processing, phosphorylated by FAM20C in the extracellular medium. Post-translationally, O- and N-glycosylated. O-glycosylated with core 1 or possibly core 8 glycans. N-glycan at Asn-156: Hex5HexNAc4; N-glycan heterogeneity at Asn-176: Hex5HexNAc4 (major) and Hex6HexNAc5 (minor). As to expression, synthesized in liver and selectively concentrated in bone matrix. Secreted in plasma. It is also found in dentin in much higher quantities than other plasma proteins.

The protein resides in the secreted. Promotes endocytosis, possesses opsonic properties and influences the mineral phase of bone. Shows affinity for calcium and barium ions. The polypeptide is Alpha-2-HS-glycoprotein (AHSG) (Homo sapiens (Human)).